The sequence spans 596 residues: MKRKSRFWPILLGFTVLVAAGLYYVVRMFSVDLPDYPKVDKVTWLEQNWSQSQRGWMHHADQGTVTFSMPYEWLAALEQPTFTLTAGPPFLSSDYLDRFGFITADSSGLPVGFAHGGDLVDPKTAQPWVNPATGKPLTTVGLTCAACHTGRFTYKGTAVMVDGGPALTDLGKFRKASGLALFFTRYAPFRFDRFATAVLGPQADEKARAVLKKQLDKVLAGGRIEVDLDKKVAEKSIEEGFGRLDALNRIGNQVFSLDLERPENYVAQSAPVAFPHIWDTSWFDWVQYNASIMQPMVRNAGEALGVRAFINLTKSEQPLFASTVKVDTIFEIEQQLAGKQPTAENGFTGLRPPRWPSNLFGSIDTKLATEGAAVYADRCQGCHLPPVGSEGFWEQKHWTNENSAGERYLRVPIINVENIGTDPAQAQSMAERKVKLPSELGIDTDSFGSALGALVAKTAARWYDNQTPPVPAEQREIMNGNRQNGIQAPLAYKARPLDGIWATPPFLHNGSVPTIDALLSPAGERPKTFWLGNREYDPDKLGYLTDELKGGFKFDTAKPGNSNAGHEFSDTPGPGVIGPALKPDEKAALIAYLKTL.

A helical transmembrane segment spans residues 7–26; that stretch reads FWPILLGFTVLVAAGLYYVV.

The protein resides in the membrane. This is an uncharacterized protein from Sinorhizobium fredii (strain NBRC 101917 / NGR234).